Consider the following 138-residue polypeptide: Nuclear membrane organization protein APQ12 (138 aa).

Topologically, residues 1 to 39 (MDATQPQYELSVVTQCLKSAIDVIQWLIPTITKFSQSHP) are cytoplasmic. The helical transmembrane segment at 40 to 58 (LVFQLLFIFFTFYVFYKLL) threads the bilayer. Topologically, residues 59–67 (MNFITLVKR) are perinuclear space. A helical membrane pass occupies residues 68–84 (FLYLTLVVTCIGIYMRG). Residues 85 to 138 (SQQFLTVDLLNFYNFVMSNRYYAFKIYTLFINALEREINTVYHLAQMKMEQLLK) are Cytoplasmic-facing.

The protein belongs to the APQ12 family.

The protein resides in the nucleus membrane. Its subcellular location is the endoplasmic reticulum membrane. Involved in the regulation of lipid homeostasis in the endoplasmic reticulum, thereby impacting nuclear pore complex biogenesis and localization, and nucleocytoplasmic mRNA transport. In Saccharomyces cerevisiae (strain ATCC 204508 / S288c) (Baker's yeast), this protein is Nuclear membrane organization protein APQ12 (APQ12).